A 20-amino-acid polypeptide reads, in one-letter code: Equinatoxin-1 (20 aa).

The segment at Ala3–Ala12 is plays an important role in the hemolytic activity. The tract at residues Gly11 to Gln20 is N-terminal region.

The protein belongs to the actinoporin family. Sea anemone subfamily. In terms of assembly, octamer or nonamer in membranes. Monomer in the soluble state.

The protein resides in the secreted. It is found in the nematocyst. It localises to the target cell membrane. In terms of biological role, pore-forming protein that forms cations-selective hydrophilic pores of around 1 nm and causes cardiac stimulation and cytolysis. Pore formation is a multi-step process that involves specific recognition of membrane sphingomyelin (but neither cholesterol nor phosphatidylcholine) using aromatic rich region and adjacent phosphocholine (POC) binding site, firm binding to the membrane (mainly driven by hydrophobic interactions) accompanied by the transfer of the N-terminal region to the lipid-water interface and finally pore formation after oligomerization of monomers. Cytolytic effects include red blood cells hemolysis, platelet aggregation and lysis, cytotoxic and cytostatic effects on fibroblasts. Lethality in mammals has been ascribed to severe vasospasm of coronary vessels, cardiac arrhythmia, and inotropic effects. This is Equinatoxin-1 from Actinia equina (Beadlet anemone).